A 369-amino-acid polypeptide reads, in one-letter code: Aminomethyltransferase (369 aa).

This sequence belongs to the GcvT family. As to quaternary structure, the glycine cleavage system is composed of four proteins: P, T, L and H.

The enzyme catalyses N(6)-[(R)-S(8)-aminomethyldihydrolipoyl]-L-lysyl-[protein] + (6S)-5,6,7,8-tetrahydrofolate = N(6)-[(R)-dihydrolipoyl]-L-lysyl-[protein] + (6R)-5,10-methylene-5,6,7,8-tetrahydrofolate + NH4(+). Functionally, the glycine cleavage system catalyzes the degradation of glycine. This Synechococcus sp. (strain WH7803) protein is Aminomethyltransferase.